Consider the following 287-residue polypeptide: 1-acyl-sn-glycerol-3-phosphate acyltransferase alpha (287 aa).

The signal sequence occupies residues 1–26 (MELWPGAGTLLLLLFLLLLLLLPTLW). The Lumenal segment spans residues 27–37 (FCSPSAKYFFK). Residues 38–58 (MAFYNGWILFLAVLAIPVCAV) traverse the membrane as a helical segment. Over 59–127 (RGRNVENMKI…PGHCVPIAKR (69 aa)) the chain is Cytoplasmic. An HXXXXD motif motif is present at residues 104 to 109 (HQSSLD). Residues 128–148 (ELLWAGSAGLACWLAGVIFID) traverse the membrane as a helical segment. The Lumenal portion of the chain corresponds to 149 to 192 (RKRTGDAISVMSEVAQTLLTQDVRVWVFPEGTRNHNGSMLPFKR). Positions 178–181 (EGTR) match the EGTR motif motif.

This sequence belongs to the 1-acyl-sn-glycerol-3-phosphate acyltransferase family.

The protein resides in the endoplasmic reticulum membrane. It catalyses the reaction a 1-acyl-sn-glycero-3-phosphate + an acyl-CoA = a 1,2-diacyl-sn-glycero-3-phosphate + CoA. The enzyme catalyses 1-(9Z-octadecenoyl)-sn-glycero-3-phosphate + (9Z)-octadecenoyl-CoA = 1,2-di-(9Z-octadecenoyl)-sn-glycero-3-phosphate + CoA. It carries out the reaction 1-(9Z-octadecenoyl)-sn-glycero-3-phosphate + hexadecanoyl-CoA = 1-(9Z)-octadecenoyl-2-hexadecanoyl-sn-glycero-3-phosphate + CoA. The catalysed reaction is heptadecanoyl-CoA + 1-(9Z-octadecenoyl)-sn-glycero-3-phosphate = 1-(9Z)-octadecenoyl-2-heptadecanoyl-sn-glycero-3-phosphate + CoA. It catalyses the reaction 1-(9Z-octadecenoyl)-sn-glycero-3-phosphate + octadecanoyl-CoA = 1-(9Z-octadecenoyl)-2-octadecanoyl-sn-glycero-3-phosphate + CoA. The enzyme catalyses 1-(9Z-octadecenoyl)-sn-glycero-3-phosphate + (9Z,12Z)-octadecadienoyl-CoA = 1-(9Z)-octadecenoyl-2-(9Z,12Z)-octadecadienoyl-sn-glycero-3-phosphate + CoA. It carries out the reaction 1-(9Z-octadecenoyl)-sn-glycero-3-phosphate + tetradecanoyl-CoA = 1-(9Z)-octadecenoyl-2-tetradecanoyl-sn-glycero-3-phosphate + CoA. The catalysed reaction is pentadecanoyl-CoA + 1-(9Z-octadecenoyl)-sn-glycero-3-phosphate = 1-(9Z)-octadecenoyl-2-pentadecanoyl-sn-glycero-3-phosphate + CoA. It catalyses the reaction 1-hexadecanoyl-sn-glycero-3-phosphate + (9Z)-octadecenoyl-CoA = 1-hexadecanoyl-2-(9Z-octadecenoyl)-sn-glycero-3-phosphate + CoA. The enzyme catalyses 1-(9Z,12Z,15Z)-octadecatrienoyl-sn-glycero-3-phosphate + (9Z)-octadecenoyl-CoA = 1-(9Z,12Z,15Z)-octadecatrienoyl-2-(9Z)-octadecenoyl-sn-glycero-3-phosphate + CoA. It carries out the reaction 1-(6Z,9Z,12Z-octadecatrienoyl)-sn-glycero-3-phosphate + (9Z)-octadecenoyl-CoA = (6Z,9Z,12Z)-octadecatrienoyl-2-(9Z)-octadecenoyl-sn-glycero-3-phosphate + CoA. The catalysed reaction is 1-eicosanoyl-sn-glycero-3-phosphate + (9Z)-octadecenoyl-CoA = 1-eicosanoyl-2-(9Z)-octadecenoyl-sn-glycero-3-phosphate + CoA. It catalyses the reaction 1-tetradecanoyl-sn-glycerol 3-phosphate + (9Z)-octadecenoyl-CoA = 1-tetradecanoyl-2-(9Z)-octadecenoyl-sn-glycero-3-phosphate + CoA. The enzyme catalyses 1-(9Z-octadecenoyl)-sn-glycero-3-phosphate + (5Z,8Z,11Z,14Z)-eicosatetraenoyl-CoA = 1-(9Z)-octadecenoyl-2-(5Z,8Z,11Z,14Z)-eicosatetraenoyl-sn-glycero-3-phosphate + CoA. It carries out the reaction 1-(9Z-octadecenoyl)-sn-glycero-3-phosphate + dodecanoyl-CoA = 1-(9Z)-octadecenoyl-2-dodecanoyl-sn-glycero-3-phosphate + CoA. The catalysed reaction is (6Z)-octadecenoyl-CoA + 1-(9Z-octadecenoyl)-sn-glycero-3-phosphate = 1-(9Z)-octadecenoyl-2-(6Z)-octadecenoyl-sn-glycero-3-phosphate + CoA. It catalyses the reaction (11Z)-octadecenoyl-CoA + 1-(9Z-octadecenoyl)-sn-glycero-3-phosphate = 1-(9Z)-octadecenoyl-2-(11Z)-octadecenoyl-sn-glycero-3-phosphate + CoA. The enzyme catalyses (9Z)-hexadecenoyl-CoA + 1-(9Z-octadecenoyl)-sn-glycero-3-phosphate = 1-(9Z-octadecenoyl)-2-(9Z-hexadecenoyl)-sn-glycero-3-phosphate + CoA. The protein operates within phospholipid metabolism; CDP-diacylglycerol biosynthesis; CDP-diacylglycerol from sn-glycerol 3-phosphate: step 2/3. Converts 1-acyl-sn-glycerol-3-phosphate (lysophosphatidic acid or LPA) into 1,2-diacyl-sn-glycerol-3-phosphate (phosphatidic acid or PA) by incorporating an acyl moiety at the sn-2 position of the glycerol backbone. This Ovis aries (Sheep) protein is 1-acyl-sn-glycerol-3-phosphate acyltransferase alpha (AGPAT1).